The following is a 37-amino-acid chain: MKVRPSVKPICEKCKVIRRKGKIRIICENPKHKQRQG.

The protein belongs to the bacterial ribosomal protein bL36 family.

The sequence is that of Large ribosomal subunit protein bL36 from Caldicellulosiruptor saccharolyticus (strain ATCC 43494 / DSM 8903 / Tp8T 6331).